A 396-amino-acid polypeptide reads, in one-letter code: MTEHNVRNFNINFGPQHPAAHGVLRLVLELDGEIVERVDPHIGLLHRGTEKLIETKTYLQAVPYFDRLDYVAPMNQEHAYALAVEKLLGIQIPIRGQLIRVLYSEIGRILSHLLNVTTQAMDVGALTPPLWGFEEREKLMVFYERASGSRMHAAYFRPGGVHQDLPEKLVQDIGDWCDPFLKALDDIDDLLTGNRIFKQRNVDIGVVSLEDCWAWGFSGVMVRGSGAAWDLRRAQPYECYSDLEFDIPIGKNGDNYDRYLIRMIEMRQSVRIMKQCVNRLLSDARTGPFSSIDGKVVPPKRGEMKRSMEALIHHFKLYTEGYHVPAGEVYTAVEAPKGEFGVYLVSDGSNKPYRCKIRAPGYAHLQAMDFMCRGHQLADVAAVLGSLDIVFGEVDR.

Belongs to the complex I 49 kDa subunit family. As to quaternary structure, NDH-1 is composed of 14 different subunits. Subunits NuoB, C, D, E, F, and G constitute the peripheral sector of the complex.

The protein resides in the cell inner membrane. The enzyme catalyses a quinone + NADH + 5 H(+)(in) = a quinol + NAD(+) + 4 H(+)(out). NDH-1 shuttles electrons from NADH, via FMN and iron-sulfur (Fe-S) centers, to quinones in the respiratory chain. The immediate electron acceptor for the enzyme in this species is believed to be ubiquinone. Couples the redox reaction to proton translocation (for every two electrons transferred, four hydrogen ions are translocated across the cytoplasmic membrane), and thus conserves the redox energy in a proton gradient. The polypeptide is NADH-quinone oxidoreductase subunit D 1 (Rhizobium etli (strain ATCC 51251 / DSM 11541 / JCM 21823 / NBRC 15573 / CFN 42)).